The primary structure comprises 677 residues: Methionine--tRNA ligase (677 aa).

Residues 15 to 25 (PYANGSIHLGH) carry the 'HIGH' region motif. Zn(2+) is bound by residues Cys-146, Cys-149, Cys-159, and Cys-162. Positions 333–337 (KMSKS) match the 'KMSKS' region motif. Residue Lys-336 coordinates ATP. Residues 575-677 (DFAKVDLRVA…EGAKPGQQVK (103 aa)) enclose the tRNA-binding domain.

Belongs to the class-I aminoacyl-tRNA synthetase family. MetG type 1 subfamily. In terms of assembly, homodimer. It depends on Zn(2+) as a cofactor.

Its subcellular location is the cytoplasm. It catalyses the reaction tRNA(Met) + L-methionine + ATP = L-methionyl-tRNA(Met) + AMP + diphosphate. Is required not only for elongation of protein synthesis but also for the initiation of all mRNA translation through initiator tRNA(fMet) aminoacylation. This Enterobacter sp. (strain 638) protein is Methionine--tRNA ligase.